Consider the following 168-residue polypeptide: Xanthine-guanine phosphoribosyltransferase (168 aa).

Residues 46 to 47 and 101 to 109 contribute to the 5-phospho-alpha-D-ribose 1-diphosphate site; these read RG and DDLVDSGVT. A Mg(2+)-binding site is contributed by Asp102. Asp105 contacts guanine. Xanthine is bound by residues Asp105 and Val148. Residues 105–109 and 147–148 each bind GMP; these read DSGVT and WV.

This sequence belongs to the purine/pyrimidine phosphoribosyltransferase family. XGPT subfamily. In terms of assembly, homotetramer. Mg(2+) serves as cofactor.

It is found in the cell inner membrane. The catalysed reaction is GMP + diphosphate = guanine + 5-phospho-alpha-D-ribose 1-diphosphate. The enzyme catalyses XMP + diphosphate = xanthine + 5-phospho-alpha-D-ribose 1-diphosphate. It catalyses the reaction IMP + diphosphate = hypoxanthine + 5-phospho-alpha-D-ribose 1-diphosphate. It functions in the pathway purine metabolism; GMP biosynthesis via salvage pathway; GMP from guanine: step 1/1. It participates in purine metabolism; XMP biosynthesis via salvage pathway; XMP from xanthine: step 1/1. In terms of biological role, purine salvage pathway enzyme that catalyzes the transfer of the ribosyl-5-phosphate group from 5-phospho-alpha-D-ribose 1-diphosphate (PRPP) to the N9 position of the 6-oxopurines guanine and xanthine to form the corresponding ribonucleotides GMP (guanosine 5'-monophosphate) and XMP (xanthosine 5'-monophosphate), with the release of PPi. To a lesser extent, also acts on hypoxanthine. This chain is Xanthine-guanine phosphoribosyltransferase, found in Gluconobacter oxydans (strain 621H) (Gluconobacter suboxydans).